Reading from the N-terminus, the 407-residue chain is Deacetylase Atu3266 (407 aa).

Zn(2+) is bound by residues His-75, His-77, Lys-173, His-206, His-229, and Asp-289. Residue Lys-173 is modified to N6-carboxylysine.

It belongs to the metallo-dependent hydrolases superfamily. Atu3266/EF_0837 deacetylase family. Homohexamer, dimer of trimers. Requires Zn(2+) as cofactor.

Esterase that catalyzes the deacetylation of acetyl-(R)-mandelate (in vitro). Can also hydrolyze acetyl glycolate, but with lower efficiency. Has very low N-acetyl-D-amino acid deacetylase activity with N-acetyl-D-serine and N-acetyl-D-threonine (in vitro). Theoretical substrate docking studies suggest that other N-acetylated amino acids may optimally occupy the active site and may in fact be the physiological substrates. The polypeptide is Deacetylase Atu3266 (Agrobacterium fabrum (strain C58 / ATCC 33970) (Agrobacterium tumefaciens (strain C58))).